Consider the following 303-residue polypeptide: Putative ring-cleaving dioxygenase MhqE (303 aa).

VOC domains are found at residues 5 to 129 (GLHH…IMED) and 150 to 266 (GMKG…IATD). Fe cation-binding residues include histidine 8, histidine 215, and glutamate 262.

It belongs to the extradiol ring-cleavage dioxygenase family. It depends on Fe(2+) as a cofactor.

The protein resides in the cytoplasm. Putative ring-cleavage dioxygenase that may contribute to the degradation of aromatic compounds. The chain is Putative ring-cleaving dioxygenase MhqE (mhqE) from Bacillus subtilis (strain 168).